The chain runs to 173 residues: Xanthine-guanine phosphoribosyltransferase (173 aa).

Residues 48–49 and 107–115 each bind 5-phospho-alpha-D-ribose 1-diphosphate; these read RG and DDLVDTGKT. A Mg(2+)-binding site is contributed by Asp-108. Guanine contacts are provided by Asp-111 and Ile-154. Asp-111 and Ile-154 together coordinate xanthine. Residues 111–115 and 153–154 each bind GMP; these read DTGKT and WI.

This sequence belongs to the purine/pyrimidine phosphoribosyltransferase family. XGPT subfamily. Homotetramer. It depends on Mg(2+) as a cofactor.

The protein resides in the cell inner membrane. It carries out the reaction GMP + diphosphate = guanine + 5-phospho-alpha-D-ribose 1-diphosphate. The catalysed reaction is XMP + diphosphate = xanthine + 5-phospho-alpha-D-ribose 1-diphosphate. The enzyme catalyses IMP + diphosphate = hypoxanthine + 5-phospho-alpha-D-ribose 1-diphosphate. It functions in the pathway purine metabolism; GMP biosynthesis via salvage pathway; GMP from guanine: step 1/1. It participates in purine metabolism; XMP biosynthesis via salvage pathway; XMP from xanthine: step 1/1. In terms of biological role, purine salvage pathway enzyme that catalyzes the transfer of the ribosyl-5-phosphate group from 5-phospho-alpha-D-ribose 1-diphosphate (PRPP) to the N9 position of the 6-oxopurines guanine and xanthine to form the corresponding ribonucleotides GMP (guanosine 5'-monophosphate) and XMP (xanthosine 5'-monophosphate), with the release of PPi. To a lesser extent, also acts on hypoxanthine. The polypeptide is Xanthine-guanine phosphoribosyltransferase (Rhodopseudomonas palustris (strain ATCC BAA-98 / CGA009)).